The sequence spans 602 residues: VIN3-like protein 1 (602 aa).

The disordered stretch occupies residues 1–38 (MDSSSTKSKISHSRKTNKKSNKKHESNGKQQQQQDVDG). Basic residues predominate over residues 9 to 22 (KISHSRKTNKKSNK). The PHD-type zinc-finger motif lies at 67–137 (RCSCCVCHNF…CFCCYSCGKV (71 aa)). Positions 144–151 (WKKQLVAA) match the Nuclear localization signal motif. Residues 242 to 340 (VPAACRFHFE…AMCFTKSVEI (99 aa)) enclose the Fibronectin type-III domain. A disordered region spans residues 430–470 (LNEEFTPPDSSGGEDNGVPLNSLAEADGGDHDDNCDDAVSN). The tract at residues 502-602 (AISDSNDSEN…RPNNGVMTSH (101 aa)) is VIN3-Interacting Domain (VID).

Interacts with VIN3 and VIL2. The heterodimer made of VIN3 and VIL1 is required for establishing the vernalization-induced epigenetic silencing of FLC. Component of the plant homeodomain / polycomb repressive complex 2 (PHD-PRC2) large complex during prolonged cold, composed of core PRC2 components (VRN2, EZA1, FIE and MSI1), and three related PHD finger proteins (VIL1, VIL2 and VIN3) that mediates histone H3 trimethylation on 'Lys-27' (H3K27me3). In terms of tissue distribution, accumulates in shoot and root apices, and in leaves.

Its subcellular location is the nucleus. It is found in the nucleus speckle. Its function is as follows. Involved in both the vernalization and photoperiod pathways by regulating expression of the related floral repressors FLOWERING LOCUS C (FLC) and FLOWERING LOCUS M (FLM). Together with VIN3, required during vernalization for the modifications of FLC and FLM chromatin that are associated with an epigenetically silenced state (e.g. chromatin modifications, histone deacetylation, and trimethylated H3 'Lys-4' H3K4me3 and 'Lys-27' H3K27me3) and with acquisition of competence to flower. Promotes flowering in short days (SD=8 hours light/16 hours dark). Associates dynamically at FLC locus; during vernalization, binds to specific sites, but when in warm conditions, distributed along the whole locus. The sequence is that of VIN3-like protein 1 (VIL1) from Arabidopsis thaliana (Mouse-ear cress).